The chain runs to 940 residues: Alanine--tRNA ligase (940 aa).

4 residues coordinate Zn(2+): histidine 581, histidine 585, cysteine 683, and histidine 687.

This sequence belongs to the class-II aminoacyl-tRNA synthetase family. Zn(2+) serves as cofactor.

Its subcellular location is the cytoplasm. The catalysed reaction is tRNA(Ala) + L-alanine + ATP = L-alanyl-tRNA(Ala) + AMP + diphosphate. Its function is as follows. Catalyzes the attachment of alanine to tRNA(Ala) in a two-step reaction: alanine is first activated by ATP to form Ala-AMP and then transferred to the acceptor end of tRNA(Ala). Also edits incorrectly charged Ser-tRNA(Ala) and Gly-tRNA(Ala) via its editing domain. This Leptospira borgpetersenii serovar Hardjo-bovis (strain JB197) protein is Alanine--tRNA ligase.